A 403-amino-acid polypeptide reads, in one-letter code: KFHAYFPTANSYPAIVADMLSGAIACIGFTWIASPACTELEVAMLDWLGKMLELPAEFLACSGGKGGGVIQGTASEATLVALLGAKAKKMKEVRETHPDWDDHTIISKLVGYSSAQAHSSVERAGLLGGVKLRSVPADEQNRLRGEALEKAIEQDLADGLIPFYAVVTLGTTNSCAFDRLDECGPVANKHNVWVHVDAAYAGSAFICPEYRHLMKGIETADSFNFNPHKWMLVNFDCSAMWLKDPSWVVNAFNVDPLYLKHDMQGSAPDYRHWQIPIGRRFRALKLWFVLRLYGVENLQAHIRRHCTYAQQFAELCVQDSRFELAAEVNMGLVCFRLKGSNERNEALLKRINGRGKIHLVPAKIRDVYFLRMAVCSRFTRPEDMEYSWQEVSAAADEEEQQQK.

T8 is a binding site for substrate. Pyridoxal 5'-phosphate is bound by residues A74 and S75. H118 serves as a coordination point for substrate. H118 is an active-site residue. Positions 197 and 226 each coordinate pyridoxal 5'-phosphate. K229 carries the N6-(pyridoxal phosphate)lysine modification. Positions 250–276 are disordered; it reads NAFNVDPLYLKHDMQGSAPDYRHWQIP.

It belongs to the group II decarboxylase family. In terms of assembly, homodimer. Pyridoxal 5'-phosphate serves as cofactor.

The enzyme catalyses L-dopa + H(+) = dopamine + CO2. The catalysed reaction is 5-hydroxy-L-tryptophan + H(+) = serotonin + CO2. Functionally, catalyzes the decarboxylation of L-3,4-dihydroxyphenylalanine (L-DOPA) to dopamine and L-5-hydroxytryptophan (5-HTP) to serotonin. Catalyzes the formation of serotonin more efficiently than dopamine. Displays no activity to tyrosine. Variation in the synthesis of bioamines may be a factor contributing to natural variation in life span. This Drosophila lebanonensis (Fruit fly) protein is Aromatic-L-amino-acid decarboxylase (Ddc).